We begin with the raw amino-acid sequence, 367 residues long: Peptide chain release factor 2 (367 aa).

Position 254 is an N5-methylglutamine (glutamine 254).

It belongs to the prokaryotic/mitochondrial release factor family. In terms of processing, methylated by PrmC. Methylation increases the termination efficiency of RF2.

The protein resides in the cytoplasm. Peptide chain release factor 2 directs the termination of translation in response to the peptide chain termination codons UGA and UAA. The sequence is that of Peptide chain release factor 2 from Acidovorax ebreus (strain TPSY) (Diaphorobacter sp. (strain TPSY)).